A 362-amino-acid polypeptide reads, in one-letter code: Methylthioribose-1-phosphate isomerase (362 aa).

Asp252 serves as the catalytic Proton donor.

This sequence belongs to the eIF-2B alpha/beta/delta subunits family. MtnA subfamily.

It is found in the cytoplasm. Its subcellular location is the nucleus. It catalyses the reaction 5-(methylsulfanyl)-alpha-D-ribose 1-phosphate = 5-(methylsulfanyl)-D-ribulose 1-phosphate. It participates in amino-acid biosynthesis; L-methionine biosynthesis via salvage pathway; L-methionine from S-methyl-5-thio-alpha-D-ribose 1-phosphate: step 1/6. In terms of biological role, catalyzes the interconversion of methylthioribose-1-phosphate (MTR-1-P) into methylthioribulose-1-phosphate (MTRu-1-P). The sequence is that of Methylthioribose-1-phosphate isomerase from Drosophila pseudoobscura pseudoobscura (Fruit fly).